Here is a 275-residue protein sequence, read N- to C-terminus: N-acetyltransferase YodP (275 aa).

Residues 125-271 enclose the N-acetyltransferase domain; it reads FTMRKAETND…AEGLENMNIW (147 aa).

It belongs to the acetyltransferase family.

It carries out the reaction (3S)-3,6-diaminohexanoate + acetyl-CoA = (3S)-6-acetamido-3-aminohexanoate + CoA + H(+). In vitro, is able to catalyze the acetylation of beta-lysine to N6-acetyl-beta-lysine, an archaeal osmolyte produced by methanogenic archaea. Its physiological function has not yet been elucidated. The polypeptide is N-acetyltransferase YodP (yodP) (Bacillus subtilis (strain 168)).